An 88-amino-acid polypeptide reads, in one-letter code: Small ribosomal subunit protein uS17 (88 aa).

The protein belongs to the universal ribosomal protein uS17 family. As to quaternary structure, part of the 30S ribosomal subunit.

In terms of biological role, one of the primary rRNA binding proteins, it binds specifically to the 5'-end of 16S ribosomal RNA. The protein is Small ribosomal subunit protein uS17 of Pseudomonas entomophila (strain L48).